Consider the following 1759-residue polypeptide: Histone-lysine N-methyltransferase ASHH2 (1759 aa).

Basic and acidic residues-rich tracts occupy residues 154 to 165 (QEKEAPQAKEDE), 197 to 206 (ETTKHIKPDE), and 215 to 224 (RFDDGGKEGR). Disordered stretches follow at residues 154–181 (QEKEAPQAKEDEGYGGTTLPIGGSGIDT), 197–237 (ETTK…GSSD), 437–482 (CEAG…IESI), 515–556 (SNNI…NRNI), and 738–816 (DELR…VGRI). The span at 462-472 (SARHLRKSSRK) shows a compositional bias: basic residues. Residues 530 to 556 (RSQGNLNNGEHNRSSHNGNVEGSNRNI) show a composition bias toward polar residues. The segment covering 758 to 775 (KKAKHPKSKSNGTKKGKS) has biased composition (basic residues). Composition is skewed to basic and acidic residues over residues 776-797 (KFSESAKDGRKNESHEGVEQRK) and 804-816 (GRDDSDYPEVGRI). The CW-type zinc finger occupies 859–912 (YSTESAWVRCDDCFKWRRIPASVVGSIDESSRWICMNNSDKRFADCSKSQEMSN). Zn(2+) is bound by residues C868, C871, C893, and C904. The region spanning 974-1024 (DEIMVCHCKPSPDGRLGCGEECLNRMLNIECLQGTCPAGDLCSNQQFQKRK) is the AWS domain. In terms of domain architecture, SET spans 1026–1143 (VKFERFQSGK…KGQELTFDYN (118 aa)). Y1142 lines the S-adenosyl-L-methionine pocket. A Post-SET domain is found at 1151 to 1167 (AAKKCYCGSSHCRGYIG). Disordered regions lie at residues 1225-1253 (GYKDLAPDNTQTQSSVSVKLPEREIPPPL), 1271-1345 (AVQQ…PGVN), 1496-1606 (ERSE…FSSP), and 1727-1759 (KQSVPPWLRNNGGEKTANSPIPGNLTLEKKLNS). The segment covering 1232–1241 (DNTQTQSSVS) has biased composition (polar residues). Positions 1284 to 1293 (STSPTSSSLS) are enriched in low complexity. The segment covering 1304–1316 (KTTKHGSGEDKKI) has biased composition (basic and acidic residues). Positions 1317–1326 (LPRPRPRMKT) are enriched in basic residues. Basic and acidic residues predominate over residues 1511 to 1521 (ASQEPRYDHQS). The segment covering 1530-1556 (SVTSSKAATPETASVSEGYSEPNSGLP) has biased composition (polar residues). Basic and acidic residues predominate over residues 1566 to 1577 (RWDQPSKTKEQR). Residues 1581–1594 (ILSQQTDETNGNQD) show a composition bias toward polar residues.

Belongs to the class V-like SAM-binding methyltransferase superfamily. Histone-lysine methyltransferase family. SET2 subfamily. In terms of assembly, interacts with FRI and SUF4, two components of the transcription activator complex FRI-C, and with SWC6, a component of the SWR1 chromatin-remodeling complex. Interacts with BZR2/BES1 and IWS1. As to expression, ubiquitous, with higher levels in young tissues, including shoot and root apex. Expressed in ovules, tapetum layer and microspores.

Its subcellular location is the nucleus. The protein localises to the chromosome. It localises to the centromere. It carries out the reaction N(6)-methyl-L-lysyl(36)-[histone H3] + S-adenosyl-L-methionine = N(6),N(6)-dimethyl-L-lysyl(36)-[histone H3] + S-adenosyl-L-homocysteine + H(+). The catalysed reaction is N(6),N(6)-dimethyl-L-lysyl(36)-[histone H3] + S-adenosyl-L-methionine = N(6),N(6),N(6)-trimethyl-L-lysyl(36)-[histone H3] + S-adenosyl-L-homocysteine + H(+). Histone methyltransferase involved in di and tri-methylation of 'Lys-36' of histone H3 (H3K36me2 and H3K36me3). Binds to H3 already mono- or di-methylated on 'Lys-4'(H3K4me1 or H3K4me2), but not to H3K4me3. H3K4me and H3K36me represent specific tags for epigenetic transcriptional activation. Positively regulates FLC transcription to prevent early flowering transition. Required for flowering transition in response to vernalization and for the maintenance of FLC expression in late embryos, but dispensable for the initial reactivation in early embryos during reprogramming. Also seems to modulate several traits including floral organ size, root size and dormancy. Promotes apical dominance. Directly involved in the tri-methylation of 'Lys-36' of histone H3 (H3K36me3) at LAZ5 chromatin to maintain a transcriptionally active state of LAZ5, a TIR-NB-LRR protein involved in innate immunity. Required for brassinosteroid (BR)-induced gene expression and histone H3 trimethylation on 'Lys-36' (H3K36me3) in BR-regulated genes. In Arabidopsis thaliana (Mouse-ear cress), this protein is Histone-lysine N-methyltransferase ASHH2.